The following is a 377-amino-acid chain: Leucine aminopeptidase A (377 aa).

The N-terminal stretch at 1–18 (MRFLPCIATLAATASALA) is a signal peptide. A propeptide spanning residues 19–79 (IGDHVRSDDQ…SNKKQKLAVT (61 aa)) is cleaved from the precursor. Asn-87 carries an N-linked (GlcNAc...) asparagine glycan. Zn(2+) is bound by residues His-176, Asp-195, Glu-234, and Asp-261. Asn-288 is a glycosylation site (N-linked (GlcNAc...) asparagine). Cys-310 and Cys-314 are disulfide-bonded. Residue His-343 coordinates Zn(2+).

It belongs to the peptidase M28 family. M28E subfamily. Monomer. Requires Zn(2+) as cofactor.

The protein resides in the secreted. Calcium, magnesium and manganese cations reduce peptidase activity to 20.3-51.3 percent. The metal ion chelating reagent EDTA almost completely inhibits activity. The protease inhibitor bacitracin and the aminopeptidase B inhibitor bestatin, as well as DTT and beta-mercaptoethanol act also as lap A inhibitorsD. Extracellular aminopeptidase that allows assimilation of proteinaceous substrates. In Aspergillus oryzae (strain ATCC 42149 / RIB 40) (Yellow koji mold), this protein is Leucine aminopeptidase A (lapA).